The primary structure comprises 166 residues: Regulatory protein RecX (166 aa).

Belongs to the RecX family.

The protein localises to the cytoplasm. Modulates RecA activity. This Shigella boydii serotype 4 (strain Sb227) protein is Regulatory protein RecX.